The following is a 388-amino-acid chain: Succinate--CoA ligase [ADP-forming] subunit beta (388 aa).

Residues K9 to H244 form the ATP-grasp domain. Residues K46, G53 to G55, E99, T102, and E107 contribute to the ATP site. Mg(2+)-binding residues include N199 and D213. Substrate contacts are provided by residues N264 and G321–V323.

Belongs to the succinate/malate CoA ligase beta subunit family. As to quaternary structure, heterotetramer of two alpha and two beta subunits. Mg(2+) is required as a cofactor.

The enzyme catalyses succinate + ATP + CoA = succinyl-CoA + ADP + phosphate. It carries out the reaction GTP + succinate + CoA = succinyl-CoA + GDP + phosphate. Its pathway is carbohydrate metabolism; tricarboxylic acid cycle; succinate from succinyl-CoA (ligase route): step 1/1. In terms of biological role, succinyl-CoA synthetase functions in the citric acid cycle (TCA), coupling the hydrolysis of succinyl-CoA to the synthesis of either ATP or GTP and thus represents the only step of substrate-level phosphorylation in the TCA. The beta subunit provides nucleotide specificity of the enzyme and binds the substrate succinate, while the binding sites for coenzyme A and phosphate are found in the alpha subunit. The chain is Succinate--CoA ligase [ADP-forming] subunit beta from Shewanella halifaxensis (strain HAW-EB4).